We begin with the raw amino-acid sequence, 617 residues long: Probable translation initiation factor IF-2 (617 aa).

The tr-type G domain maps to 14–231 (LRQPIVVVLG…VLAGLTQTYL (218 aa)). Residues 23–30 (GHVDHGKT) are G1. 23 to 30 (GHVDHGKT) contacts GTP. Residues 48–52 (GITQH) are G2. A G3 region spans residues 87–90 (DTPG). Residues 87–91 (DTPGH) and 141–144 (NKID) each bind GTP. The interval 141–144 (NKID) is G4. Positions 209–211 (SAR) are G5.

It belongs to the TRAFAC class translation factor GTPase superfamily. Classic translation factor GTPase family. IF-2 subfamily.

In terms of biological role, function in general translation initiation by promoting the binding of the formylmethionine-tRNA to ribosomes. Seems to function along with eIF-2. This chain is Probable translation initiation factor IF-2 (infB), found in Aeropyrum pernix (strain ATCC 700893 / DSM 11879 / JCM 9820 / NBRC 100138 / K1).